A 275-amino-acid chain; its full sequence is Dermonecrotic toxin SpeSicTox-betaIIA2v (275 aa).

His-5 is a catalytic residue. 2 residues coordinate Mg(2+): Glu-25 and Asp-27. Catalysis depends on His-41, which acts as the Nucleophile. 2 disulfide bridges follow: Cys-45–Cys-51 and Cys-47–Cys-190. Residue Asp-85 coordinates Mg(2+).

It belongs to the arthropod phospholipase D family. Class II subfamily. The cofactor is Mg(2+). Expressed by the venom gland.

The protein resides in the secreted. The catalysed reaction is an N-(acyl)-sphingosylphosphocholine = an N-(acyl)-sphingosyl-1,3-cyclic phosphate + choline. It catalyses the reaction an N-(acyl)-sphingosylphosphoethanolamine = an N-(acyl)-sphingosyl-1,3-cyclic phosphate + ethanolamine. The enzyme catalyses a 1-acyl-sn-glycero-3-phosphocholine = a 1-acyl-sn-glycero-2,3-cyclic phosphate + choline. It carries out the reaction a 1-acyl-sn-glycero-3-phosphoethanolamine = a 1-acyl-sn-glycero-2,3-cyclic phosphate + ethanolamine. Its function is as follows. Dermonecrotic toxins cleave the phosphodiester linkage between the phosphate and headgroup of certain phospholipids (sphingolipid and lysolipid substrates), forming an alcohol (often choline) and a cyclic phosphate. This toxin acts on sphingomyelin (SM). It may also act on ceramide phosphoethanolamine (CPE), lysophosphatidylcholine (LPC) and lysophosphatidylethanolamine (LPE), but not on lysophosphatidylserine (LPS), and lysophosphatidylglycerol (LPG). It acts by transphosphatidylation, releasing exclusively cyclic phosphate products as second products. Induces dermonecrosis, hemolysis, increased vascular permeability, edema, inflammatory response, and platelet aggregation. The protein is Dermonecrotic toxin SpeSicTox-betaIIA2v of Sicarius peruensis (Six-eyed sand spider).